Consider the following 311-residue polypeptide: Ribosomal RNA small subunit methyltransferase H (311 aa).

Residues 33 to 35 (AGH), aspartate 53, phenylalanine 80, aspartate 101, and glutamine 108 each bind S-adenosyl-L-methionine.

This sequence belongs to the methyltransferase superfamily. RsmH family.

The protein resides in the cytoplasm. The catalysed reaction is cytidine(1402) in 16S rRNA + S-adenosyl-L-methionine = N(4)-methylcytidine(1402) in 16S rRNA + S-adenosyl-L-homocysteine + H(+). Functionally, specifically methylates the N4 position of cytidine in position 1402 (C1402) of 16S rRNA. The polypeptide is Ribosomal RNA small subunit methyltransferase H (Geobacter sulfurreducens (strain ATCC 51573 / DSM 12127 / PCA)).